A 225-amino-acid polypeptide reads, in one-letter code: Large ribosomal subunit protein bL25 (225 aa).

Residues 206–225 are disordered; sequence EDSKNKITKDNETNKDKSNL.

It belongs to the bacterial ribosomal protein bL25 family. CTC subfamily. As to quaternary structure, part of the 50S ribosomal subunit; part of the 5S rRNA/L5/L18/L25 subcomplex. Contacts the 5S rRNA. Binds to the 5S rRNA independently of L5 and L18.

This is one of the proteins that binds to the 5S RNA in the ribosome where it forms part of the central protuberance. The sequence is that of Large ribosomal subunit protein bL25 from Vesicomyosocius okutanii subsp. Calyptogena okutanii (strain HA).